Consider the following 424-residue polypeptide: Putative ankyrin repeat protein R858 (424 aa).

4 ANK repeats span residues 115–144 (HLMC…FTKR), 147–177 (TDHT…SDYF), 184–215 (INDS…SINY), and 219–252 (TGST…DIHE).

In Acanthamoeba polyphaga (Amoeba), this protein is Putative ankyrin repeat protein R858.